Consider the following 278-residue polypeptide: Proline-rich 28 kDa antigen homolog (278 aa).

A signal peptide spans 1 to 28; it reads MIQSTQTWRVLAGGLAATAMGVTVFAGG.

It to M.tuberculosis Rv0040c.

The sequence is that of Proline-rich 28 kDa antigen homolog from Mycobacterium leprae (strain TN).